The sequence spans 75 residues: UPF0352 protein YejL (75 aa).

The protein belongs to the UPF0352 family.

This Salmonella arizonae (strain ATCC BAA-731 / CDC346-86 / RSK2980) protein is UPF0352 protein YejL.